The sequence spans 120 residues: uncharacterized protein (120 aa).

The region spanning 4–120 is the VOC domain; it reads QIGTVAVYVE…EDGNVFLLKE (117 aa).

This is an uncharacterized protein from Bacillus subtilis (strain 168).